The chain runs to 424 residues: Protein SamB (424 aa).

The UmuC domain occupies 2–189 (FALADVNSFY…QPVEEIWGVG (188 aa)).

This sequence belongs to the DNA polymerase type-Y family.

In terms of biological role, involved in UV protection and mutation. This is Protein SamB (samB) from Salmonella typhimurium.